Consider the following 205-residue polypeptide: Histidine biosynthesis bifunctional protein HisIE (205 aa).

Residues 1 to 116 (MLKLKFNEEG…KVEKPLPFEV (116 aa)) form a phosphoribosyl-AMP cyclohydrolase region. The segment at 117-205 (LPRLQDVIRE…VMEELIRRFK (89 aa)) is phosphoribosyl-ATP pyrophosphohydrolase.

In the N-terminal section; belongs to the PRA-CH family. It in the C-terminal section; belongs to the PRA-PH family.

The protein resides in the cytoplasm. The enzyme catalyses 1-(5-phospho-beta-D-ribosyl)-ATP + H2O = 1-(5-phospho-beta-D-ribosyl)-5'-AMP + diphosphate + H(+). It carries out the reaction 1-(5-phospho-beta-D-ribosyl)-5'-AMP + H2O = 1-(5-phospho-beta-D-ribosyl)-5-[(5-phospho-beta-D-ribosylamino)methylideneamino]imidazole-4-carboxamide. It functions in the pathway amino-acid biosynthesis; L-histidine biosynthesis; L-histidine from 5-phospho-alpha-D-ribose 1-diphosphate: step 2/9. Its pathway is amino-acid biosynthesis; L-histidine biosynthesis; L-histidine from 5-phospho-alpha-D-ribose 1-diphosphate: step 3/9. This chain is Histidine biosynthesis bifunctional protein HisIE (hisI), found in Aquifex aeolicus (strain VF5).